The following is a 365-amino-acid chain: Class I histocompatibility antigen, Gogo-A*0501 alpha chain (365 aa).

An N-terminal signal peptide occupies residues 1-24; sequence MAVVAPRTLLLLLSGALALTQTWA. Residues 25–114 form an alpha-1 region; that stretch reads GSHSMRYFST…ALRYYNQSED (90 aa). Residues 25–308 are Extracellular-facing; that stretch reads GSHSMRYFST…EPSSQPTIPI (284 aa). N-linked (GlcNAc...) asparagine glycosylation occurs at Asn110. The segment at 115–206 is alpha-2; the sequence is GSHTIQRMYG…ENGKETLQRT (92 aa). 2 disulfides stabilise this stretch: Cys125–Cys188 and Cys227–Cys283. The tract at residues 207 to 298 is alpha-3; sequence DAPKTHTTHQ…GLPKPLTLRW (92 aa). An Ig-like C1-type domain is found at 209 to 295; the sequence is PKTHTTHQAV…QHEGLPKPLT (87 aa). Positions 299 to 308 are connecting peptide; it reads EPSSQPTIPI. Residues 309–332 form a helical membrane-spanning segment; sequence VGIIAGLVLFGAVIAGAVVAAVRW. Residues 333-365 are Cytoplasmic-facing; it reads RRKSSDRKGGSYSQAASSDSAQGSDVSLTACKV. Residues 338-365 are disordered; that stretch reads DRKGGSYSQAASSDSAQGSDVSLTACKV. Low complexity predominate over residues 342–359; it reads GSYSQAASSDSAQGSDVS. Phosphoserine is present on Ser343. Tyr344 bears the Phosphotyrosine mark. Phosphoserine is present on residues Ser345, Ser349, Ser352, Ser356, and Ser359.

This sequence belongs to the MHC class I family. In terms of assembly, heterodimer of an alpha chain and a beta chain (beta-2-microglobulin).

Its subcellular location is the membrane. Its function is as follows. Involved in the presentation of foreign antigens to the immune system. This Gorilla gorilla gorilla (Western lowland gorilla) protein is Class I histocompatibility antigen, Gogo-A*0501 alpha chain.